The sequence spans 77 residues: U8-lycotoxin-Ls1p (77 aa).

The N-terminal stretch at methionine 1 to alanine 20 is a signal peptide. Positions glutamine 21–lysine 26 are excised as a propeptide.

It belongs to the neurotoxin 19 (CSTX) family. 08 (U8-Lctx) subfamily. In terms of processing, contains 4 disulfide bonds. As to expression, expressed by the venom gland.

The protein resides in the secreted. The sequence is that of U8-lycotoxin-Ls1p from Lycosa singoriensis (Wolf spider).